Reading from the N-terminus, the 96-residue chain is MEQAPEDQGPQREPHNEWTLELLEEIKNEAVRHFPRVWLHQLGQHIYNTYGDTWVGVEALIRTLQQLLFIHFRIGCQHSRIGITRQRRVRNGPSRS.

The segment at 1-42 is homooligomerization; the sequence is MEQAPEDQGPQREPHNEWTLELLEEIKNEAVRHFPRVWLHQL. Residues serine 79, serine 94, and serine 96 each carry the phosphoserine; by host modification.

It belongs to the HIV-1 VPR protein family. Homooligomer, may form homodimer. Interacts with p6-gag region of the Pr55 Gag precursor protein through a (Leu-X-X)4 motif near the C-terminus of the P6gag protein. Interacts with host UNG. May interact with host RAD23A/HHR23A. Interacts with host VPRBP/DCAF1, leading to hijack the CUL4A-RBX1-DDB1-DCAF1/VPRBP complex, mediating ubiquitination of host proteins such as TERT and ZGPAT and arrest of the cell cycle in G2 phase. Phosphorylated on several residues by host. These phosphorylations regulate VPR activity for the nuclear import of the HIV-1 pre-integration complex.

The protein resides in the virion. It localises to the host nucleus. It is found in the host extracellular space. Functionally, during virus replication, may deplete host UNG protein, and incude G2-M cell cycle arrest. Acts by targeting specific host proteins for degradation by the 26S proteasome, through association with the cellular CUL4A-DDB1 E3 ligase complex by direct interaction with host VPRPB/DCAF-1. Cell cycle arrest reportedly occurs within hours of infection and is not blocked by antiviral agents, suggesting that it is initiated by the VPR carried into the virion. Additionally, VPR induces apoptosis in a cell cycle dependent manner suggesting that these two effects are mechanistically linked. Detected in the serum and cerebrospinal fluid of AIDS patient, VPR may also induce cell death to bystander cells. Its function is as follows. During virus entry, plays a role in the transport of the viral pre-integration (PIC) complex to the host nucleus. This function is crucial for viral infection of non-dividing macrophages. May act directly at the nuclear pore complex, by binding nucleoporins phenylalanine-glycine (FG)-repeat regions. The sequence is that of Protein Vpr from Homo sapiens (Human).